A 311-amino-acid polypeptide reads, in one-letter code: L-lactate dehydrogenase 2 (311 aa).

Val-14, Asp-35, and Arg-40 together coordinate NAD(+). Arg-90 is a substrate binding site. Residues Ser-103, 120–122 (ATN), and Thr-145 each bind NAD(+). Residue 122–125 (NPCD) participates in substrate binding. 150–153 (DTTR) contributes to the substrate binding site. The active-site Proton acceptor is His-177. Thr-230 is a binding site for substrate.

This sequence belongs to the LDH/MDH superfamily. LDH family. As to quaternary structure, homotetramer.

The protein localises to the cytoplasm. It catalyses the reaction (S)-lactate + NAD(+) = pyruvate + NADH + H(+). It functions in the pathway fermentation; pyruvate fermentation to lactate; (S)-lactate from pyruvate: step 1/1. Catalyzes the conversion of lactate to pyruvate. This chain is L-lactate dehydrogenase 2, found in Listeria monocytogenes serotype 4b (strain F2365).